Reading from the N-terminus, the 516-residue chain is Glycerol-3-phosphate dehydrogenase 1 (516 aa).

An FAD-binding site is contributed by 28-56 (DVIVIGGGITGVGIALDAATRGLTVALVE).

This sequence belongs to the FAD-dependent glycerol-3-phosphate dehydrogenase family. FAD is required as a cofactor.

The protein resides in the cytoplasm. The enzyme catalyses a quinone + sn-glycerol 3-phosphate = dihydroxyacetone phosphate + a quinol. The chain is Glycerol-3-phosphate dehydrogenase 1 (glpD1) from Mycobacterium bovis (strain ATCC BAA-935 / AF2122/97).